Consider the following 138-residue polypeptide: Large ribosomal subunit protein uL16 (138 aa).

The protein belongs to the universal ribosomal protein uL16 family. As to quaternary structure, part of the 50S ribosomal subunit.

Its function is as follows. Binds 23S rRNA and is also seen to make contacts with the A and possibly P site tRNAs. In Chlamydia felis (strain Fe/C-56) (Chlamydophila felis), this protein is Large ribosomal subunit protein uL16.